A 110-amino-acid chain; its full sequence is UPF0060 membrane protein Nmul_A0351 (110 aa).

The next 4 membrane-spanning stretches (helical) occupy residues 7–27 (LFLF…PYLW), 33–53 (SAWL…LLTL), 63–83 (AAYG…VDGV), and 87–107 (AWDM…MFGP).

The protein belongs to the UPF0060 family.

Its subcellular location is the cell inner membrane. This is UPF0060 membrane protein Nmul_A0351 from Nitrosospira multiformis (strain ATCC 25196 / NCIMB 11849 / C 71).